Reading from the N-terminus, the 188-residue chain is dCTP deaminase (188 aa).

A dCTP-binding site is contributed by 107 to 112 (KSTYAR). The Proton donor/acceptor role is filled by glutamate 133. The dCTP site is built by glutamine 152, tyrosine 166, and glutamine 176.

It belongs to the dCTP deaminase family. As to quaternary structure, homotrimer.

It carries out the reaction dCTP + H2O + H(+) = dUTP + NH4(+). It functions in the pathway pyrimidine metabolism; dUMP biosynthesis; dUMP from dCTP (dUTP route): step 1/2. In terms of biological role, catalyzes the deamination of dCTP to dUTP. The protein is dCTP deaminase of Sulfurovum sp. (strain NBC37-1).